A 375-amino-acid polypeptide reads, in one-letter code: Geranylgeranyl transferase type-1 subunit beta (375 aa).

The segment at 1-33 (MSETAVSIDSDRSKSEEEDEEEYSPPVQSSPSA) is disordered. The residue at position 2 (S2) is an N-acetylserine. PFTB repeat units follow at residues 157 to 199 (SKSL…YMLD), 206 to 247 (KESA…RLMG), 265 to 306 (PSLL…KLIG), and 313 to 354 (KMAL…SLLE). Geranylgeranyl diphosphate contacts are provided by residues 232–234 (HGG) and 285–288 (RTNK). D291 and C293 together coordinate Zn(2+). A geranylgeranyl diphosphate-binding site is contributed by 294–297 (YAFW). Residue H342 coordinates Zn(2+).

Belongs to the protein prenyltransferase subunit beta family. As to quaternary structure, heterodimer of an alpha and a beta subunit. Zn(2+) is required as a cofactor. Requires Mg(2+) as cofactor. Expressed in roots, leaves, stems, flowers and siliques.

The catalysed reaction is geranylgeranyl diphosphate + L-cysteinyl-[protein] = S-geranylgeranyl-L-cysteinyl-[protein] + diphosphate. Catalyzes the transfer of a geranyl-geranyl moiety from geranyl-geranyl pyrophosphate to a cysteine at the fourth position from the C-terminus of proteins having the C-terminal sequence Cys-aliphatic-aliphatic-X (CaaX). Seems to exclusively prenylate CaaX substrates with leucine in the terminal position. The beta subunit is responsible for peptide-binding. May negatively regulate abscisic acid (ABA) signaling in guard cells and auxin-induced lateral root initiation. Functionally, negatively regulates ABA signaling in guard cells. in negative regulation of auxin-induced lateral root initiation. The sequence is that of Geranylgeranyl transferase type-1 subunit beta (GGB) from Arabidopsis thaliana (Mouse-ear cress).